Reading from the N-terminus, the 102-residue chain is Small ribosomal subunit protein uS10 (102 aa).

The protein belongs to the universal ribosomal protein uS10 family. As to quaternary structure, part of the 30S ribosomal subunit.

Involved in the binding of tRNA to the ribosomes. The sequence is that of Small ribosomal subunit protein uS10 from Leptospira biflexa serovar Patoc (strain Patoc 1 / Ames).